We begin with the raw amino-acid sequence, 312 residues long: Malate dehydrogenase (312 aa).

NAD(+) is bound by residues 12-17 (GAGFTG) and aspartate 36. 2 residues coordinate substrate: arginine 87 and arginine 93. Residues asparagine 100 and 123-125 (LTN) contribute to the NAD(+) site. Asparagine 125 serves as a coordination point for substrate. Serine 149 bears the Phosphoserine mark. Substrate is bound at residue arginine 156. The active-site Proton acceptor is histidine 180.

This sequence belongs to the LDH/MDH superfamily. MDH type 3 family.

The catalysed reaction is (S)-malate + NAD(+) = oxaloacetate + NADH + H(+). Functionally, catalyzes the reversible oxidation of malate to oxaloacetate. The chain is Malate dehydrogenase from Geobacillus kaustophilus (strain HTA426).